We begin with the raw amino-acid sequence, 438 residues long: MKPLRYTASALALGLALMANAQAVTTIPFWHSMEGELGKEVDSLAQRFNAENPDYKIVPTYKGNYEQNLSAGIAAFRTGNAPAILQVYEVGTATMMASKAIKPVYDVFKEAGIQFDESQFVPTVSGYYSDSKTGHLLSQPFNSSTPVLYYNKDAFKKAGLDPEQPPKTWQDLADYAAKLKASGMKCGYASGWQGWIQLENFSAWNGLPFASKNNGFDGTDAVLEFNKPEQVKHIAMLEEMNKKGDFSYVGRKDESTEKFYNGDCAMTTASSGSLANIREYAKFNYGVGMMPYDADAKDAPQNAIIGGASLWVMQGKDKETYTGVAKFLDFLAKPENAAEWHQKTGYLPITKAAYDLTREQGFYEKNPGADIATRQMLNKPPLPFTKGLRLGNMPQIRVIVDEELESVWTGKKTPQQALDTAVERGNQLLRRFEKSTKS.

Positions 1–23 are cleaved as a signal peptide; it reads MKPLRYTASALALGLALMANAQA. Tyr-65, Glu-89, Ser-144, Ser-270, Gly-307, Tyr-346, and Arg-397 together coordinate sn-glycerol 3-phosphate.

It belongs to the bacterial solute-binding protein 1 family. In terms of assembly, the complex is composed of two ATP-binding proteins (UgpC), two transmembrane proteins (UgpA and UgpE) and a solute-binding protein (UgpB).

It localises to the periplasm. Functionally, part of the ABC transporter complex UgpBAEC involved in sn-glycerol-3-phosphate (G3P) import. Binds G3P. The protein is sn-glycerol-3-phosphate-binding periplasmic protein UgpB (ugpB) of Escherichia coli O6:K15:H31 (strain 536 / UPEC).